The primary structure comprises 71 residues: Cruzioseptin-2 (71 aa).

A signal peptide spans 1 to 22 (MAFLKKSLFLVLFLGLVSLSIC). Residues 23–43 (EEEKREEENEEVQEDDDQSEE) constitute a propeptide that is removed on maturation. The residue at position 68 (Gln-68) is a Glutamine amide. Residues 70–71 (EQ) constitute a propeptide that is removed on maturation.

As to expression, expressed by the skin glands.

It is found in the secreted. Has antimicrobial activity against Gram-negative bacterium E.coli (MIC=26.35 uM), against Gram-positive bacterium S.aureus (MIC=6.59 uM) and against fungus C.albicans (MIC=13.18 uM). At higher concentrations also has a bactericidal and fungicidal effect. Has hemagglutinating activity against horse erythrocytes. The polypeptide is Cruzioseptin-2 (Cruziohyla calcarifer (Splendid leaf frog)).